The sequence spans 384 residues: Histidinol-phosphate aminotransferase 1 (384 aa).

An N6-(pyridoxal phosphate)lysine modification is found at K233.

This sequence belongs to the class-II pyridoxal-phosphate-dependent aminotransferase family. Histidinol-phosphate aminotransferase subfamily. As to quaternary structure, homodimer. It depends on pyridoxal 5'-phosphate as a cofactor.

The catalysed reaction is L-histidinol phosphate + 2-oxoglutarate = 3-(imidazol-4-yl)-2-oxopropyl phosphate + L-glutamate. It functions in the pathway amino-acid biosynthesis; L-histidine biosynthesis; L-histidine from 5-phospho-alpha-D-ribose 1-diphosphate: step 7/9. The chain is Histidinol-phosphate aminotransferase 1 from Thiobacillus denitrificans (strain ATCC 25259 / T1).